The sequence spans 410 residues: Sprouty-related, EVH1 domain-containing protein 2 (410 aa).

The region spanning 5 to 122 is the WH1 domain; it reads THPDDDSYIV…RGVRKAIEDL (118 aa). A disordered region spans residues 127–171; sequence TTSSSTIHNEAELGDDDVFTTATDSSSNSSQKREPNTRTISSPTS. A compositionally biased stretch (polar residues) spans 146–156; that stretch reads TTATDSSSNSS. The KBD domain maps to 197–252; the sequence is SYPQVTFPEDDEEIVRINPREKIWMTGYEDYRHAPVRGKYLDSTEDADSYVRFAKG. 2 positions are modified to phosphotyrosine: Tyr224 and Tyr227. The tract at residues 274 to 294 is disordered; sequence DPKGNVIKTQPPRAKSRRRKE. The 109-residue stretch at 300–408 folds into the SPR domain; sequence RCVYCRDMFN…CRCCGGKHKA (109 aa).

In terms of assembly, homodimer and heterodimer. Able to interact with SPRED1 to form heterodimers. Interacts with RAS. May interact with ZDHHC13 (via ANK repeats) and ZDHHC17 (via ANK repeats). Interacts with TESK1. Interacts with NF1. In terms of processing, phosphorylated on serine and threonine residues. Phosphorylated on tyrosine. Phosphorylation of Tyr-224 and Tyr-227 are required for ubiquitination. Post-translationally, ubiquitinated; leading to degradation by the proteasome. As to expression, expressed in the eye, with higher expression in lens epithelium than in lens fiber cells at postnatal day 15.

It localises to the cell membrane. The protein localises to the cytoplasmic vesicle. The protein resides in the secretory vesicle membrane. It is found in the cytoplasm. Functionally, negatively regulates Ras signaling pathways and downstream activation of MAP kinases. Recruits and translocates NF1 to the cell membrane, thereby enabling NF1-dependent hydrolysis of active GTP-bound Ras to inactive GDP-bound Ras. Inhibits fibroblast growth factor (FGF)-induced retinal lens fiber differentiation, probably by inhibiting FGF-mediated phosphorylation of ERK1/2. Inhibits TGFB-induced epithelial-to-mesenchymal transition in lens epithelial cells. In Rattus norvegicus (Rat), this protein is Sprouty-related, EVH1 domain-containing protein 2 (Spred2).